A 372-amino-acid polypeptide reads, in one-letter code: 4-hydroxy-3-methylbut-2-en-1-yl diphosphate synthase (flavodoxin) (372 aa).

Positions 270, 273, 305, and 312 each coordinate [4Fe-4S] cluster.

The protein belongs to the IspG family. The cofactor is [4Fe-4S] cluster.

It carries out the reaction (2E)-4-hydroxy-3-methylbut-2-enyl diphosphate + oxidized [flavodoxin] + H2O + 2 H(+) = 2-C-methyl-D-erythritol 2,4-cyclic diphosphate + reduced [flavodoxin]. Its pathway is isoprenoid biosynthesis; isopentenyl diphosphate biosynthesis via DXP pathway; isopentenyl diphosphate from 1-deoxy-D-xylulose 5-phosphate: step 5/6. Functionally, converts 2C-methyl-D-erythritol 2,4-cyclodiphosphate (ME-2,4cPP) into 1-hydroxy-2-methyl-2-(E)-butenyl 4-diphosphate. The chain is 4-hydroxy-3-methylbut-2-en-1-yl diphosphate synthase (flavodoxin) from Alcanivorax borkumensis (strain ATCC 700651 / DSM 11573 / NCIMB 13689 / SK2).